A 259-amino-acid polypeptide reads, in one-letter code: MKEHKARKRFGQNFLQDTRIISDIVNAVRPQADDVVIEIGPGLAAITEPLAKKLNRLHVVEIDRDIVCRLKTLPFADKLVIHEGDVLQFDFNGIAGKKKIVGNLPYNISTPLLFKLAEVADDVVDMHFMLQKEVVERMVAAPKSNDYGRLGVMLQYFFDMEMLIDVPPESFDPAPKVDSAVVRMIPVKHRIGKADDFEHFAKLVKLAFHQRRKTIRNNLKELAGDDDLQAVGINPQDRAEHIAPEKYVALSNYLAGKAV.

Asn-13, Leu-15, Gly-40, Glu-61, Asp-85, and Asn-103 together coordinate S-adenosyl-L-methionine.

The protein belongs to the class I-like SAM-binding methyltransferase superfamily. rRNA adenine N(6)-methyltransferase family. RsmA subfamily.

The protein localises to the cytoplasm. It carries out the reaction adenosine(1518)/adenosine(1519) in 16S rRNA + 4 S-adenosyl-L-methionine = N(6)-dimethyladenosine(1518)/N(6)-dimethyladenosine(1519) in 16S rRNA + 4 S-adenosyl-L-homocysteine + 4 H(+). Functionally, specifically dimethylates two adjacent adenosines (A1518 and A1519) in the loop of a conserved hairpin near the 3'-end of 16S rRNA in the 30S particle. May play a critical role in biogenesis of 30S subunits. This is Ribosomal RNA small subunit methyltransferase A from Neisseria meningitidis serogroup C / serotype 2a (strain ATCC 700532 / DSM 15464 / FAM18).